Here is an 878-residue protein sequence, read N- to C-terminus: Phosphoenolpyruvate carboxylase (878 aa).

Residues H140 and K545 contribute to the active site.

It belongs to the PEPCase type 1 family. Mg(2+) is required as a cofactor.

The catalysed reaction is oxaloacetate + phosphate = phosphoenolpyruvate + hydrogencarbonate. Functionally, forms oxaloacetate, a four-carbon dicarboxylic acid source for the tricarboxylic acid cycle. The polypeptide is Phosphoenolpyruvate carboxylase (Pseudomonas paraeruginosa (strain DSM 24068 / PA7) (Pseudomonas aeruginosa (strain PA7))).